The chain runs to 222 residues: Cytidylate kinase (222 aa).

Gly11–Thr19 serves as a coordination point for ATP.

This sequence belongs to the cytidylate kinase family. Type 1 subfamily.

It localises to the cytoplasm. It catalyses the reaction CMP + ATP = CDP + ADP. It carries out the reaction dCMP + ATP = dCDP + ADP. The chain is Cytidylate kinase from Ureaplasma urealyticum serovar 10 (strain ATCC 33699 / Western).